Here is a 185-residue protein sequence, read N- to C-terminus: Ribosome-recycling factor (185 aa).

The protein belongs to the RRF family.

The protein localises to the cytoplasm. Functionally, responsible for the release of ribosomes from messenger RNA at the termination of protein biosynthesis. May increase the efficiency of translation by recycling ribosomes from one round of translation to another. This Proteus mirabilis (strain HI4320) protein is Ribosome-recycling factor.